The following is a 448-amino-acid chain: Trigger factor (448 aa).

Residues Gly162–Pro243 form the PPIase FKBP-type domain.

Belongs to the FKBP-type PPIase family. Tig subfamily.

The protein resides in the cytoplasm. The catalysed reaction is [protein]-peptidylproline (omega=180) = [protein]-peptidylproline (omega=0). Involved in protein export. Acts as a chaperone by maintaining the newly synthesized protein in an open conformation. Functions as a peptidyl-prolyl cis-trans isomerase. The protein is Trigger factor of Salinispora arenicola (strain CNS-205).